A 338-amino-acid chain; its full sequence is RNA 3'-terminal phosphate cyclase (338 aa).

Residues Gln-103 and 283 to 287 (YLADQ) contribute to the ATP site. His-308 (tele-AMP-histidine intermediate) is an active-site residue.

It belongs to the RNA 3'-terminal cyclase family. Type 1 subfamily.

It is found in the cytoplasm. The enzyme catalyses a 3'-end 3'-phospho-ribonucleotide-RNA + ATP = a 3'-end 2',3'-cyclophospho-ribonucleotide-RNA + AMP + diphosphate. Functionally, catalyzes the conversion of 3'-phosphate to a 2',3'-cyclic phosphodiester at the end of RNA. The mechanism of action of the enzyme occurs in 3 steps: (A) adenylation of the enzyme by ATP; (B) transfer of adenylate to an RNA-N3'P to produce RNA-N3'PP5'A; (C) and attack of the adjacent 2'-hydroxyl on the 3'-phosphorus in the diester linkage to produce the cyclic end product. The biological role of this enzyme is unknown but it is likely to function in some aspects of cellular RNA processing. In Escherichia coli O81 (strain ED1a), this protein is RNA 3'-terminal phosphate cyclase.